Here is a 319-residue protein sequence, read N- to C-terminus: Small ribosomal subunit protein RACK1 (319 aa).

Ala2 is subject to N-acetylalanine. 7 WD repeats span residues 15–55 (GHNG…QKFG), 63–102 (GHSHIVQDCTLTADGAYALSASWDKTLRLWDVATGETYQR), 105–145 (GHKS…ATLL), 147–191 (HNDW…IEAD), 194–233 (GHNSNINTLTASPDGTLIASAGKDGEIMLWNLAAKKAMYT), 235–275 (SAQD…DDLR), and 284–319 (AAEPHAVSLAWSADGQTLFAGYTDNVIRVWQVMTAN). Residues Lys46 and Lys53 each participate in a glycyl lysine isopeptide (Lys-Gly) (interchain with G-Cter in ubiquitin) cross-link. Thr96 is modified (phosphothreonine). Glycyl lysine isopeptide (Lys-Gly) (interchain with G-Cter in ubiquitin) cross-links involve residues Lys107, Lys137, and Lys161. At Thr168 the chain carries Phosphothreonine.

It belongs to the WD repeat G protein beta family. Ribosomal protein RACK1 subfamily. In terms of assembly, component of the small ribosomal subunit (SSU). Mature yeast ribosomes consist of a small (40S) and a large (60S) subunit. The 40S small subunit contains 1 molecule of ribosomal RNA (18S rRNA) and 33 different proteins (encoded by 57 genes). The large 60S subunit contains 3 rRNA molecules (25S, 5.8S and 5S rRNA) and 46 different proteins (encoded by 81 genes). RACK1 is located at the head of the SSU in the vicinity of the mRNA exit channel. RACK1 interacts with the mRNA-binding protein SCP16. RACK1 also exists simultaneously as a homodimer in a cytosolic non-ribosome-bound form.

Its subcellular location is the cytoplasm. Component of the ribosome, a large ribonucleoprotein complex responsible for the synthesis of proteins in the cell. The small ribosomal subunit (SSU) binds messenger RNAs (mRNAs) and translates the encoded message by selecting cognate aminoacyl-transfer RNA (tRNA) molecules. The large subunit (LSU) contains the ribosomal catalytic site termed the peptidyl transferase center (PTC), which catalyzes the formation of peptide bonds, thereby polymerizing the amino acids delivered by tRNAs into a polypeptide chain. The nascent polypeptides leave the ribosome through a tunnel in the LSU and interact with protein factors that function in enzymatic processing, targeting, and the membrane insertion of nascent chains at the exit of the ribosomal tunnel. Located at the head of the 40S ribosomal subunit in the vicinity of the mRNA exit channel, RACK1 serves as a scaffold protein that can recruit other proteins to the ribosome. Involved in induction of the ribosome quality control (RQC) pathway; a pathway that degrades nascent peptide chains during problematic translation. Involved in the negative regulation of translation of a specific subset of proteins. In Saccharomyces cerevisiae (strain ATCC 204508 / S288c) (Baker's yeast), this protein is Small ribosomal subunit protein RACK1.